A 523-amino-acid polypeptide reads, in one-letter code: WD repeat-containing protein YPL247C (523 aa).

The tract at residues 1–64 (MDPFHNGNKR…TTNGGNSKRN (64 aa)) is disordered. A compositionally biased stretch (polar residues) spans 9–40 (KRSSISFGSSQRQPYNKNNYLSGTNGPSSAAQ). Position 47 is a phosphoserine (S47). Residues 52 to 64 (SGNTTNGGNSKRN) are compositionally biased toward low complexity. Position 65 is a phosphoserine (S65). WD repeat units lie at residues 173-213 (DVVY…RQFQ), 241-281 (GTFP…YVKT), 285-325 (AHDS…HSTI), and 392-432 (GHGS…MEIN). The disordered stretch occupies residues 436 to 472 (SKSPSIHGTSLEDPDGDTEMTDGGAGSGLNEDPLSLN).

This sequence belongs to the WD repeat WDR68 family.

It is found in the cytoplasm. The protein resides in the nucleus. This is WD repeat-containing protein YPL247C from Saccharomyces cerevisiae (strain ATCC 204508 / S288c) (Baker's yeast).